The primary structure comprises 46 residues: Mu-segestritoxin-Sf1f (46 aa).

Cystine bridges form between Cys-3/Cys-19, Cys-10/Cys-22, Cys-18/Cys-42, and Cys-24/Cys-40. The segment at 31–33 (RPW) is keys region for toxin activity.

The protein belongs to the neurotoxin 16 (SFI) family. Expressed by the venom gland.

It localises to the secreted. Functionally, insecticidal toxin. It inhibits insect voltage-gated sodium channels (Nav) by partially blocking the channel pore in DUM neurons from the American cockroach, not by acting as a gating modifier. The inhibition is only partially reversible after prolonged washout. In vivo, the toxin causes flaccid paralysis followed by death when injected into Heliothis virescens larvae. It also causes uncoordinated movements followed by full paralysis to sheep blowflies (Lucilia cuprina). When the toxin is fused to snowdrop lectin, it is orally active against larvae of the tomato moth (Laconobia oleracea), the rice brown planthopper (Nilaparvata lugens), and the peach-potato aphid (Myzus persicae). The sequence is that of Mu-segestritoxin-Sf1f from Segestria florentina (Tube-web spider).